Consider the following 473-residue polypeptide: Cell division protein FtsP (473 aa).

Positions 1 to 27 form a signal peptide, tat-type signal; that stretch reads MSFSRRQFIQVSGLAMCIGAAPLLVRA.

The protein belongs to the FtsP family. In terms of processing, predicted to be exported by the Tat system. The position of the signal peptide cleavage has not been experimentally proven.

Its subcellular location is the periplasm. In terms of biological role, cell division protein that is required for growth during stress conditions. May be involved in protecting or stabilizing the divisomal assembly under conditions of stress. This chain is Cell division protein FtsP, found in Photorhabdus laumondii subsp. laumondii (strain DSM 15139 / CIP 105565 / TT01) (Photorhabdus luminescens subsp. laumondii).